We begin with the raw amino-acid sequence, 216 residues long: Serine/threonine-protein phosphatase 1 (216 aa).

Residues aspartate 24, histidine 26, aspartate 53, and asparagine 79 each coordinate Mn(2+). The Proton donor role is filled by histidine 80. Residue histidine 185 coordinates Mn(2+).

This sequence belongs to the PPP phosphatase family. PP-1 subfamily. It depends on Mn(2+) as a cofactor.

The catalysed reaction is O-phospho-L-seryl-[protein] + H2O = L-seryl-[protein] + phosphate. It catalyses the reaction O-phospho-L-threonyl-[protein] + H2O = L-threonyl-[protein] + phosphate. With respect to regulation, inhibited by cadmium, copper, zinc when added cobalt when added concomitantly with manganese. Functionally, can hydrolyze phosphorylated Ser-, Thr- or Tyr-substrates in vitro. The natural substrate is unknown. The chain is Serine/threonine-protein phosphatase 1 (pphA) from Salmonella typhimurium (strain LT2 / SGSC1412 / ATCC 700720).